The chain runs to 173 residues: RNA 2',3'-cyclic phosphodiesterase (173 aa).

The Proton donor role is filled by H38. 2 consecutive short sequence motifs (HXTX) follow at residues 38 to 41 (HITV) and 118 to 121 (HLTI). H118 (proton acceptor) is an active-site residue.

Belongs to the 2H phosphoesterase superfamily. ThpR family.

It carries out the reaction a 3'-end 2',3'-cyclophospho-ribonucleotide-RNA + H2O = a 3'-end 2'-phospho-ribonucleotide-RNA + H(+). Hydrolyzes RNA 2',3'-cyclic phosphodiester to an RNA 2'-phosphomonoester. This is RNA 2',3'-cyclic phosphodiesterase from Methanocaldococcus jannaschii (strain ATCC 43067 / DSM 2661 / JAL-1 / JCM 10045 / NBRC 100440) (Methanococcus jannaschii).